The following is a 500-amino-acid chain: ATP synthase subunit alpha (500 aa).

169 to 176 (GDRQTGKT) contributes to the ATP binding site.

Belongs to the ATPase alpha/beta chains family. In terms of assembly, F-type ATPases have 2 components, CF(1) - the catalytic core - and CF(0) - the membrane proton channel. CF(1) has five subunits: alpha(3), beta(3), gamma(1), delta(1), epsilon(1). CF(0) has three main subunits: a(1), b(2) and c(9-12). The alpha and beta chains form an alternating ring which encloses part of the gamma chain. CF(1) is attached to CF(0) by a central stalk formed by the gamma and epsilon chains, while a peripheral stalk is formed by the delta and b chains.

The protein resides in the cell membrane. The catalysed reaction is ATP + H2O + 4 H(+)(in) = ADP + phosphate + 5 H(+)(out). In terms of biological role, produces ATP from ADP in the presence of a proton gradient across the membrane. The alpha chain is a regulatory subunit. The protein is ATP synthase subunit alpha of Lactococcus lactis subsp. lactis (strain IL1403) (Streptococcus lactis).